A 69-amino-acid polypeptide reads, in one-letter code: DNA gyrase inhibitor YacG (69 aa).

The Zn(2+) site is built by Cys7, Cys10, Cys26, and Cys30.

Belongs to the DNA gyrase inhibitor YacG family. As to quaternary structure, interacts with GyrB. The cofactor is Zn(2+).

Inhibits all the catalytic activities of DNA gyrase by preventing its interaction with DNA. Acts by binding directly to the C-terminal domain of GyrB, which probably disrupts DNA binding by the gyrase. This is DNA gyrase inhibitor YacG from Shewanella baltica (strain OS155 / ATCC BAA-1091).